Reading from the N-terminus, the 555-residue chain is Trehalase (555 aa).

A signal peptide spans 1–16; that stretch reads MIPFLLMVAFADTVLQ. N-linked (GlcNAc...) asparagine glycosylation occurs at Asn-46. Substrate contacts are provided by residues Arg-164, 171 to 172, and Asn-208; that span reads WD. Residue Asn-216 is glycosylated (N-linked (GlcNAc...) asparagine). Substrate is bound by residues 217-219, 282-284, and Gly-316; these read RSQ and RPE. Residue Asp-318 is the Proton donor/acceptor of the active site. Asn-334 and Asn-371 each carry an N-linked (GlcNAc...) asparagine glycan. The active-site Proton donor/acceptor is Glu-516. Glu-531 is a binding site for substrate.

This sequence belongs to the glycosyl hydrolase 37 family. Bean-shaped accessory glands (bags).

Its subcellular location is the secreted. The enzyme catalyses alpha,alpha-trehalose + H2O = alpha-D-glucose + beta-D-glucose. The chain is Trehalase from Tenebrio molitor (Yellow mealworm beetle).